Reading from the N-terminus, the 1013-residue chain is Retinoblastoma-related protein 1 (1013 aa).

The tract at residues 406–607 (TPVSTAMTTA…EKGSSMYNSL (202 aa)) is domain A. The pocket stretch occupies residues 406-858 (TPVSTAMTTA…NEIFIPAVKP (453 aa)). Positions 608–727 (IVARPSLALE…PGGGGETCAE (120 aa)) are spacer. A domain B region spans residues 728 to 858 (TGINIFFTKI…NEIFIPAVKP (131 aa)). A phosphoserine mark is found at Ser885 and Ser898. The interval 979-1013 (VANSLNLQNQNQNQNGSDASSSGGAAPLKTEPTDS) is disordered. Residues 980–1004 (ANSLNLQNQNQNQNGSDASSSGGAA) are compositionally biased toward low complexity.

It belongs to the retinoblastoma protein (RB) family. As to quaternary structure, interacts with the begomovirus replication-associated protein (Rep), the nanovirus Clink protein, the mastrevirus RepA protein, E2FA, E2FB and E2FC. Interacts with MSI1 through its Domain A. Interacts with ATPK1/S6K1. Interacts with SCR. Interacts with HAT2. Interacts with FAMA. Interacts with MYB124 and MYB88. Component of a DREAM-like complex which modulates a variety of developmentally regulated genes and of the mitotic genes in proliferating and differentiated cells. Associates with MYB3R3 in both earlier and later stages of leaves development. Interacts with MYB3R4 only at early stages of leaves development. Post-translationally, highly phosphorylated by CDKA-1 during G1 to S phase transition. Once hyper-phosphorylated, becomes inactive and unable to interact with E2F. Ubiquitinated. Subject to proteasome-dependent degradation during sucrose starvation. In terms of tissue distribution, expressed in actively dividing cells. Detected in the shoot apical meristem, in young leaf primordia and in both sporophytic tissue and the megagametophyte.

The protein localises to the nucleus. Functionally, key regulator of entry into cell division. Acts as a transcription repressor of E2F target genes, whose activity is required for progress from the G1 to the S phase of the cell cycle. Hyperphosphorylation by CDKA-1 prevents the binding to E2F transcription factors, allowing G1 to S phase transition to operate. Forms a stable complex with E2FA that functions in maintaining cell proliferation through repression of cell differentiation. Plays a central role in the mechanism controlling meristem cell differentiation, cell fate establishment and cell fate maintenance during organogenesis and gametogenesis. Required during lateral organ production. Also involved in controlling asymmetric divisions of stem cells in different stem cell niches. Acts as a negative regulator of cell proliferation during leaf and gametophytes development. At later stages of development, restricts the progression through additional endocycles. In the leaf, plays a role in the control of the mesophyll differentiation. Another role is its implication in the regulation of imprinted genes. Acts together with MSI1 to repress the expression of MET1 during gametogenesis. This in turn activates expression of the imprinted genes FIS2 and FWA. Regulates many genes of the polycomb repressive complex 2 (PRC2). Plays an important role in meiosis affecting different aspects of this complex process. Functions as a positive regulator of the developmental switch from embryonic heterotrophic growth to autotrophic growth. Interaction with mastrevirus RepA or nanovirus Clink protein disrupts the RBR/E2F interaction and releases the transcription of replicative enzymes needed by the virus by increasing the E2F DNA-binding activity. In Arabidopsis thaliana (Mouse-ear cress), this protein is Retinoblastoma-related protein 1 (RBR1).